Here is a 261-residue protein sequence, read N- to C-terminus: Cytochrome c oxidase subunit 3 (261 aa).

The Mitochondrial matrix segment spans residues 1–15 (MTHQTHAYHMVNPSP). Residues 16–34 (WPLTGALSALLMTSGLIMW) traverse the membrane as a helical segment. Residues 35-40 (FHFNST) lie on the Mitochondrial intermembrane side of the membrane. The chain crosses the membrane as a helical span at residues 41 to 66 (TLLMLGLTTNMLTMYQWWRDVVREST). The Mitochondrial matrix segment spans residues 67–72 (FQGHHT). Residues 73 to 105 (PNVQKGLRYGMILFIISEVLFFTGFFWAFYHSS) form a helical membrane-spanning segment. Topologically, residues 106–128 (LAPTPELGGCWPPTGIHPLNPLE) are mitochondrial intermembrane. Residues 129–152 (VPLLNTSVLLASGVSITWAHHSLM) traverse the membrane as a helical segment. Over 153–155 (EGN) the chain is Mitochondrial matrix. Residues 156–183 (RNHMLQALFITIALGVYFTLLQASEYYE) form a helical membrane-spanning segment. Topologically, residues 184 to 190 (APFTISD) are mitochondrial intermembrane. Residues 191–223 (GVYGSTFFVATGFHGLHVIIGSTFLIVCFFRQL) form a helical membrane-spanning segment. Over 224–232 (KFHFTSSHH) the chain is Mitochondrial matrix. A helical transmembrane segment spans residues 233–256 (FGFEAAAWYWHFVDVVWLFLYVSI). Residues 257 to 261 (YWWGS) lie on the Mitochondrial intermembrane side of the membrane.

It belongs to the cytochrome c oxidase subunit 3 family. In terms of assembly, component of the cytochrome c oxidase (complex IV, CIV), a multisubunit enzyme composed of 14 subunits. The complex is composed of a catalytic core of 3 subunits MT-CO1, MT-CO2 and MT-CO3, encoded in the mitochondrial DNA, and 11 supernumerary subunits COX4I, COX5A, COX5B, COX6A, COX6B, COX6C, COX7A, COX7B, COX7C, COX8 and NDUFA4, which are encoded in the nuclear genome. The complex exists as a monomer or a dimer and forms supercomplexes (SCs) in the inner mitochondrial membrane with NADH-ubiquinone oxidoreductase (complex I, CI) and ubiquinol-cytochrome c oxidoreductase (cytochrome b-c1 complex, complex III, CIII), resulting in different assemblies (supercomplex SCI(1)III(2)IV(1) and megacomplex MCI(2)III(2)IV(2)).

The protein localises to the mitochondrion inner membrane. The enzyme catalyses 4 Fe(II)-[cytochrome c] + O2 + 8 H(+)(in) = 4 Fe(III)-[cytochrome c] + 2 H2O + 4 H(+)(out). Functionally, component of the cytochrome c oxidase, the last enzyme in the mitochondrial electron transport chain which drives oxidative phosphorylation. The respiratory chain contains 3 multisubunit complexes succinate dehydrogenase (complex II, CII), ubiquinol-cytochrome c oxidoreductase (cytochrome b-c1 complex, complex III, CIII) and cytochrome c oxidase (complex IV, CIV), that cooperate to transfer electrons derived from NADH and succinate to molecular oxygen, creating an electrochemical gradient over the inner membrane that drives transmembrane transport and the ATP synthase. Cytochrome c oxidase is the component of the respiratory chain that catalyzes the reduction of oxygen to water. Electrons originating from reduced cytochrome c in the intermembrane space (IMS) are transferred via the dinuclear copper A center (CU(A)) of subunit 2 and heme A of subunit 1 to the active site in subunit 1, a binuclear center (BNC) formed by heme A3 and copper B (CU(B)). The BNC reduces molecular oxygen to 2 water molecules using 4 electrons from cytochrome c in the IMS and 4 protons from the mitochondrial matrix. The polypeptide is Cytochrome c oxidase subunit 3 (MT-CO3) (Gazella spekei (Speke's gazelle)).